The following is a 799-amino-acid chain: MVLPILPLIDDLASWNSKKEYVSLVGQVLLDGSSLSNEEILQFSKEEEVPLVALSLPSGKFSDDEIIAFLNNGVSSLFIASQDAKTAEHLVEQLNVPKERVVVEENGVFSNQFMVKQKFSQDKIVSIKKLSKDMLTKEVLGEVRTDRPDGLYTTLVVDQYERCLGLVYSSKKSIAKAIDLGRGVYYSRSRNEIWIKGETSGNGQKLLQISTDCDSDALKFIVEQENVGFCHLETMSCFGEFKHGLVGLESLLKQRLQDAPEESYTRRLFNDSALLDAKIKEEAEELTEAKGKKELSWEAADLFYFALAKLVANDVSLKDVENNLNMKHLKVTRRKGDAKPKFVGQPKAEEEKLTGPIHLDVVKASDKVGVQKALSRPIQKTSEIMHLVNPIIENVRDKGNSALLEYTEKFDGVKLSNPVLNAPFPEEYFEGLTEEMKEALDLSIENVRKFHAAQLPTETLEVETQPGVLCSRFPRPIEKVGLYIPGGTAILPSTALMLGVPAQVAQCKEIVFASPPRKSDGKVSPEVVYVAEKVGASKIVLAGGAQAVAAMAYGTETIPKVDKILGPGNQFVTAAKMYVQNDTQALCSIDMPAGPSEVLVIADEDADVDFVASDLLSQAEHGIDSQVILVGVNLSEKKIQEIQDAVHNQALQLPRVDIVRKCIAHSTIVLCDGYEEALEMSNQYAPEHLILQIANANDYVKLVDNAGSVFVGAYTPESCGDYSSGTNHTLPTYGYARQYSGANTATFQKFITAQNITPEGLENIGRAVMCVAKKEGLDGHRNAVKIRMSKLGLIPKDFQ.

The tract at residues methionine 1–phenylalanine 229 is phosphoribosyl-AMP cyclohydrolase. A phosphoribosyl-ATP pyrophosphohydrolase region spans residues cysteine 230–alanine 312. Positions asparagine 313 to glutamine 799 are histidinol dehydrogenase. Zn(2+)-binding residues include glutamine 618 and histidine 621. Catalysis depends on residues glutamate 687 and histidine 688. Zn(2+)-binding residues include aspartate 721 and histidine 780.

In the C-terminal section; belongs to the histidinol dehydrogenase family. Zn(2+) is required as a cofactor.

It catalyses the reaction 1-(5-phospho-beta-D-ribosyl)-5'-AMP + H2O = 1-(5-phospho-beta-D-ribosyl)-5-[(5-phospho-beta-D-ribosylamino)methylideneamino]imidazole-4-carboxamide. The enzyme catalyses 1-(5-phospho-beta-D-ribosyl)-ATP + H2O = 1-(5-phospho-beta-D-ribosyl)-5'-AMP + diphosphate + H(+). The catalysed reaction is L-histidinol + 2 NAD(+) + H2O = L-histidine + 2 NADH + 3 H(+). Its pathway is amino-acid biosynthesis; L-histidine biosynthesis; L-histidine from 5-phospho-alpha-D-ribose 1-diphosphate: step 2/9. It participates in amino-acid biosynthesis; L-histidine biosynthesis; L-histidine from 5-phospho-alpha-D-ribose 1-diphosphate: step 3/9. It functions in the pathway amino-acid biosynthesis; L-histidine biosynthesis; L-histidine from 5-phospho-alpha-D-ribose 1-diphosphate: step 9/9. The protein is Histidine biosynthesis trifunctional protein of Saccharomyces cerevisiae (strain ATCC 204508 / S288c) (Baker's yeast).